Here is a 226-residue protein sequence, read N- to C-terminus: 7-cyano-7-deazaguanine synthase (226 aa).

An ATP-binding site is contributed by 7–17 (LSGGMDSLVTT). Zn(2+) contacts are provided by Cys-187, Cys-195, Cys-198, and Cys-201.

This sequence belongs to the QueC family. Zn(2+) is required as a cofactor.

It catalyses the reaction 7-carboxy-7-deazaguanine + NH4(+) + ATP = 7-cyano-7-deazaguanine + ADP + phosphate + H2O + H(+). The protein operates within purine metabolism; 7-cyano-7-deazaguanine biosynthesis. In terms of biological role, catalyzes the ATP-dependent conversion of 7-carboxy-7-deazaguanine (CDG) to 7-cyano-7-deazaguanine (preQ(0)). In Chloroherpeton thalassium (strain ATCC 35110 / GB-78), this protein is 7-cyano-7-deazaguanine synthase.